The chain runs to 426 residues: Histidine--tRNA ligase (426 aa).

This sequence belongs to the class-II aminoacyl-tRNA synthetase family.

It localises to the cytoplasm. It catalyses the reaction tRNA(His) + L-histidine + ATP = L-histidyl-tRNA(His) + AMP + diphosphate + H(+). This Saccharolobus shibatae (strain ATCC 51178 / DSM 5389 / JCM 8931 / NBRC 15437 / B12) (Sulfolobus shibatae) protein is Histidine--tRNA ligase.